The sequence spans 208 residues: ATP phosphoribosyltransferase (208 aa).

It belongs to the ATP phosphoribosyltransferase family. Short subfamily. Heteromultimer composed of HisG and HisZ subunits.

The protein localises to the cytoplasm. The enzyme catalyses 1-(5-phospho-beta-D-ribosyl)-ATP + diphosphate = 5-phospho-alpha-D-ribose 1-diphosphate + ATP. It participates in amino-acid biosynthesis; L-histidine biosynthesis; L-histidine from 5-phospho-alpha-D-ribose 1-diphosphate: step 1/9. In terms of biological role, catalyzes the condensation of ATP and 5-phosphoribose 1-diphosphate to form N'-(5'-phosphoribosyl)-ATP (PR-ATP). Has a crucial role in the pathway because the rate of histidine biosynthesis seems to be controlled primarily by regulation of HisG enzymatic activity. This is ATP phosphoribosyltransferase from Thermotoga petrophila (strain ATCC BAA-488 / DSM 13995 / JCM 10881 / RKU-1).